The chain runs to 30 residues: Cyclotide hyen-L (30 aa).

Positions 1 to 30 (GIPCAESCVYIPCTVTALLGCSCSDKVCYN) form a cross-link, cyclopeptide (Gly-Asn). Intrachain disulfides connect Cys-4/Cys-21, Cys-8/Cys-23, and Cys-13/Cys-28.

This is a cyclic peptide. Detected in stems (at protein level).

Functionally, probably participates in a plant defense mechanism. Has cytotoxic activity against HUVEC cells (LC(50)= 2.26 uM) and various cancer cells including HeLa (LC(50)= 3.48 uM), MCF-7 and K562. Displays very weak hemolytic activity. Binds to and induces leakage in phospholipd membranes, particularly ones containing 1-palmitoyl-2-oleophosphatidylethanolamine (POPE). The sequence is that of Cyclotide hyen-L from Pigea enneasperma (Spade flower).